Reading from the N-terminus, the 136-residue chain is Interleukin-13 (136 aa).

Positions 1-18 (MALWLTVVIAFTCIGGLA) are cleaved as a signal peptide. N38, N49, N57, N72, N75, and N131 each carry an N-linked (GlcNAc...) asparagine glycan. 2 disulfide bridges follow: C48–C76 and C64–C90.

This sequence belongs to the IL-4/IL-13 family. In terms of assembly, interacts with IL13RA2.

The protein localises to the secreted. Functionally, cytokine that plays important roles in allergic inflammation and immune response to parasite infection. Synergizes with IL2 in regulating interferon-gamma synthesis. Stimulates B-cell proliferation, and activation of eosinophils, basophils, and mast cells. Plays an important role in controlling IL33 activity by modulating the production of transmembrane and soluble forms of interleukin-1 receptor-like 1/IL1RL1. Displays the capacity to antagonize Th1-driven proinflammatory immune response and downregulates synthesis of many proinflammatory cytokines including IL1, IL6, IL10, IL12 and TNF-alpha through a mechanism that partially involves suppression of NF-kappa-B. Also functions on nonhematopoietic cells, including endothelial cells where it induces vascular cell adhesion protein 1/VCAM1, which is important in the recruitment of eosinophils. Exerts its biological effects through its receptors which comprises the IL4R chain and the IL13RA1 chain, to activate JAK1 and TYK2, leading to the activation of STAT6. Aside from IL13RA1, another receptor IL13RA2 acts as a high affinity decoy for IL13 and mediates internalization and depletion of extracellular IL13. This is Interleukin-13 (IL13) from Camelus bactrianus (Bactrian camel).